The following is a 150-amino-acid chain: Large ribosomal subunit protein bL9 (150 aa).

The protein belongs to the bacterial ribosomal protein bL9 family.

In terms of biological role, binds to the 23S rRNA. The sequence is that of Large ribosomal subunit protein bL9 from Streptococcus agalactiae serotype Ia (strain ATCC 27591 / A909 / CDC SS700).